A 307-amino-acid chain; its full sequence is Formate hydrogenlyase subunit 4 (307 aa).

At 1 to 2 (MS) the chain is on the periplasmic side. The chain crosses the membrane as a helical span at residues 3–23 (VLYPLIQALVLFAVAPLLSGI). The Cytoplasmic segment spans residues 24–67 (TRVARARLHNRRGPGVLQEYRDIIKLLGRQSVGPDASGWVFRLT). The helical transmembrane segment at 68–88 (PYVMVGVMLTIATALPVVTVG) threads the bilayer. The Periplasmic segment spans residues 89–93 (SPLPQ). Residues 94–114 (LGDLITLLYLFAIARFFFAIS) form a helical membrane-spanning segment. The Cytoplasmic segment spans residues 115-131 (GLDTGSPFTAIGASREA). A helical membrane pass occupies residues 132-152 (MLGVLVEPMLLLGLWVAAQVA). The Periplasmic portion of the chain corresponds to 153-167 (GSTNISNITDTVYHW). The chain crosses the membrane as a helical span at residues 168 to 188 (PLSQSIPLVLALCACAFATFI). Residues 189–221 (EMGKLPFDLAEAEQELQEGPLSEYSGSGFGVMK) are Cytoplasmic-facing. A helical transmembrane segment spans residues 222 to 242 (WGISLKQLVVLQMFVGVFIPW). The Periplasmic segment spans residues 243 to 253 (GQMETFTAGGL). The chain crosses the membrane as a helical span at residues 254-274 (LLALVIAIVKLVVGVLVIALF). The Cytoplasmic portion of the chain corresponds to 275–284 (ENSMARLRLD). Residues 285–305 (ITPRITWAGFGFAFLAFVSLL) form a helical membrane-spanning segment. At 306-307 (AA) the chain is on the periplasmic side.

Belongs to the complex I subunit 1 family. In terms of assembly, FHL comprises of a formate dehydrogenase, unidentified electron carriers and a hydrogenase (isoenzyme 3). In this non-energy conserving pathway molecular hydrogen and carbodioxide from formate are released.

It localises to the cell inner membrane. The chain is Formate hydrogenlyase subunit 4 (hycD) from Escherichia coli (strain K12).